A 602-amino-acid polypeptide reads, in one-letter code: Aspartate--tRNA(Asp/Asn) ligase (602 aa).

E175 lines the L-aspartate pocket. Residues 199–202 (QIFK) form an aspartate region. R221 is a binding site for L-aspartate. Residues 221-223 (RDE) and Q230 contribute to the ATP site. H458 serves as a coordination point for L-aspartate. Residue E492 coordinates ATP. R499 is an L-aspartate binding site. 544–547 (GLDR) contacts ATP.

Belongs to the class-II aminoacyl-tRNA synthetase family. Type 1 subfamily. As to quaternary structure, homodimer.

It is found in the cytoplasm. The enzyme catalyses tRNA(Asx) + L-aspartate + ATP = L-aspartyl-tRNA(Asx) + AMP + diphosphate. In terms of biological role, aspartyl-tRNA synthetase with relaxed tRNA specificity since it is able to aspartylate not only its cognate tRNA(Asp) but also tRNA(Asn). Reaction proceeds in two steps: L-aspartate is first activated by ATP to form Asp-AMP and then transferred to the acceptor end of tRNA(Asp/Asn). This is Aspartate--tRNA(Asp/Asn) ligase from Cupriavidus metallidurans (strain ATCC 43123 / DSM 2839 / NBRC 102507 / CH34) (Ralstonia metallidurans).